The sequence spans 504 residues: Cytochrome P450 2S1 (504 aa).

Heme is bound at residue C440.

It belongs to the cytochrome P450 family. The cofactor is heme. In terms of tissue distribution, expressed at higher levels in extrahepatic tissues including trachea, lung, stomach, small intestine, colon, kidney, breast, placenta and spleen. Expressed in peripheral blood leukocytes. Constitutively expressed in skin (at protein level).

It localises to the endoplasmic reticulum membrane. Its subcellular location is the microsome membrane. It catalyses the reaction all-trans-retinoate + reduced [NADPH--hemoprotein reductase] + O2 = all-trans-5,6-epoxyretinoate + oxidized [NADPH--hemoprotein reductase] + H2O + H(+). The catalysed reaction is all-trans-retinoate + reduced [NADPH--hemoprotein reductase] + O2 = all-trans-4-hydroxyretinoate + oxidized [NADPH--hemoprotein reductase] + H2O + H(+). The enzyme catalyses (5S)-hydroperoxy-(6E,8Z,11Z,14Z)-eicosatetraenoate = 5-oxo-(6E,8Z,11Z,14Z)-eicosatetraenoate + H2O. It carries out the reaction (12S)-hydroperoxy-(5Z,8Z,10E,14Z)-eicosatetraenoate = 12-oxo-(5Z,8Z,10E,14Z)-eicosatetraenoate + H2O. It catalyses the reaction (15S)-hydroperoxy-(5Z,8Z,11Z,13E)-eicosatetraenoate = 15-oxo-(5Z,8Z,11Z,13E)-eicosatetraenoate + H2O. The catalysed reaction is prostaglandin H2 = thromboxane A2. The enzyme catalyses prostaglandin H2 = (12S)-hydroxy-(5Z,8E,10E)-heptadecatrienoate + malonaldehyde. It carries out the reaction (13S)-hydroperoxy-(9Z,11E)-octadecadienoate = 13-oxo-(9Z,11E)-octadecadienoate + H2O. It functions in the pathway lipid metabolism; fatty acid metabolism. Its function is as follows. A cytochrome P450 monooxygenase involved in the metabolism of retinoids and eicosanoids. In epidermis, may contribute to the oxidative metabolism of all-trans-retinoic acid. For this activity, uses molecular oxygen inserting one oxygen atom into a substrate, and reducing the second into a water molecule, with two electrons provided by NADPH via cytochrome P450 reductase (NADPH--hemoprotein reductase). Additionally, displays peroxidase and isomerase activities toward various oxygenated eicosanoids such as prostaglandin H2 (PGH2) and hydroperoxyeicosatetraenoates (HPETEs). Independently of cytochrome P450 reductase, NADPH, and O2, catalyzes the breakdown of PGH2 to hydroxyheptadecatrienoic acid (HHT) and malondialdehyde (MDA), which is known to act as a mediator of DNA damage. This is Cytochrome P450 2S1 from Homo sapiens (Human).